An 818-amino-acid polypeptide reads, in one-letter code: Lon protease (818 aa).

A Lon N-terminal domain is found at 14 to 216; that stretch reads LPVLPLRDVV…KVFALIEREI (203 aa). 370–377 is a binding site for ATP; sequence GPPGVGKT. Residues 605–786 form the Lon proteolytic domain; sequence ESLVGIVTGL…DEVIKVALMH (182 aa). Residues Ser692 and Lys735 contribute to the active site.

This sequence belongs to the peptidase S16 family. Homohexamer. Organized in a ring with a central cavity.

Its subcellular location is the cytoplasm. The catalysed reaction is Hydrolysis of proteins in presence of ATP.. Functionally, ATP-dependent serine protease that mediates the selective degradation of mutant and abnormal proteins as well as certain short-lived regulatory proteins. Required for cellular homeostasis and for survival from DNA damage and developmental changes induced by stress. Degrades polypeptides processively to yield small peptide fragments that are 5 to 10 amino acids long. Binds to DNA in a double-stranded, site-specific manner. In Wolbachia pipientis subsp. Culex pipiens (strain wPip), this protein is Lon protease.